The primary structure comprises 891 residues: Aconitate hydratase A (891 aa).

[4Fe-4S] cluster is bound by residues Cys435, Cys501, and Cys504.

It belongs to the aconitase/IPM isomerase family. As to quaternary structure, monomer. [4Fe-4S] cluster serves as cofactor.

The enzyme catalyses citrate = D-threo-isocitrate. It participates in carbohydrate metabolism; tricarboxylic acid cycle; isocitrate from oxaloacetate: step 2/2. Catalyzes the reversible isomerization of citrate to isocitrate via cis-aconitate. The apo form of AcnA functions as a RNA-binding regulatory protein which plays a role as a maintenance or survival enzyme during nutritional or oxidative stress. During oxidative stress inactive AcnA apo-enzyme without iron sulfur clusters binds the acnA mRNA 3' UTRs (untranslated regions), stabilizes acnA mRNA and increases AcnA synthesis, thus mediating a post-transcriptional positive autoregulatory switch. AcnA also enhances the stability of the sodA transcript. This chain is Aconitate hydratase A, found in Escherichia coli (strain K12).